A 510-amino-acid chain; its full sequence is tRNA-2-methylthio-N(6)-dimethylallyladenosine synthase (510 aa).

Residues 1–25 (MSGFNDSPVPESAEKADGLLSQERG) form a disordered region. Residues 34 to 154 (RKLFVKSYGC…LPDLLRRVAH (121 aa)) form the MTTase N-terminal domain. The [4Fe-4S] cluster site is built by C43, C79, C117, C195, C199, and C202. Residues 181–414 (AERGVGAFVT…QALLEEQRQA (234 aa)) form the Radical SAM core domain. A TRAM domain is found at 417–479 (KAMIGRVLPV…PNSFHGRLLA (63 aa)). The span at 484-493 (QESAQGQESA) shows a compositional bias: polar residues. The disordered stretch occupies residues 484–510 (QESAQGQESAQGMERMEQNARAWEVPV).

The protein belongs to the methylthiotransferase family. MiaB subfamily. Monomer. It depends on [4Fe-4S] cluster as a cofactor.

The protein localises to the cytoplasm. The catalysed reaction is N(6)-dimethylallyladenosine(37) in tRNA + (sulfur carrier)-SH + AH2 + 2 S-adenosyl-L-methionine = 2-methylsulfanyl-N(6)-dimethylallyladenosine(37) in tRNA + (sulfur carrier)-H + 5'-deoxyadenosine + L-methionine + A + S-adenosyl-L-homocysteine + 2 H(+). Functionally, catalyzes the methylthiolation of N6-(dimethylallyl)adenosine (i(6)A), leading to the formation of 2-methylthio-N6-(dimethylallyl)adenosine (ms(2)i(6)A) at position 37 in tRNAs that read codons beginning with uridine. The polypeptide is tRNA-2-methylthio-N(6)-dimethylallyladenosine synthase (Beijerinckia indica subsp. indica (strain ATCC 9039 / DSM 1715 / NCIMB 8712)).